A 434-amino-acid polypeptide reads, in one-letter code: DNA primase large subunit PriL (434 aa).

Residues cysteine 281, cysteine 392, cysteine 403, and cysteine 409 each coordinate [4Fe-4S] cluster.

The protein belongs to the eukaryotic-type primase large subunit family. Heterodimer of a small subunit (PriS) and a large subunit (PriL). It depends on [4Fe-4S] cluster as a cofactor.

Regulatory subunit of DNA primase, an RNA polymerase that catalyzes the synthesis of short RNA molecules used as primers for DNA polymerase during DNA replication. Stabilizes and modulates the activity of the small subunit, increasing the rate of DNA synthesis, and conferring RNA synthesis capability. The DNA polymerase activity may enable DNA primase to also catalyze primer extension after primer synthesis. May also play a role in DNA repair. The polypeptide is DNA primase large subunit PriL (Methanothermobacter thermautotrophicus (strain ATCC 29096 / DSM 1053 / JCM 10044 / NBRC 100330 / Delta H) (Methanobacterium thermoautotrophicum)).